The following is a 162-amino-acid chain: 2-C-methyl-D-erythritol 2,4-cyclodiphosphate synthase (162 aa).

A divalent metal cation contacts are provided by aspartate 8 and histidine 10. Residues 8–10 (DVH) and 36–37 (HS) each bind 4-CDP-2-C-methyl-D-erythritol 2-phosphate. Residue histidine 44 participates in a divalent metal cation binding. Residues 58–60 (DIG), 63–67 (FPDTD), 102–108 (AQAPKMA), 134–137 (TTTE), phenylalanine 141, and arginine 144 each bind 4-CDP-2-C-methyl-D-erythritol 2-phosphate.

Belongs to the IspF family. As to quaternary structure, homotrimer. A divalent metal cation is required as a cofactor.

It carries out the reaction 4-CDP-2-C-methyl-D-erythritol 2-phosphate = 2-C-methyl-D-erythritol 2,4-cyclic diphosphate + CMP. It functions in the pathway isoprenoid biosynthesis; isopentenyl diphosphate biosynthesis via DXP pathway; isopentenyl diphosphate from 1-deoxy-D-xylulose 5-phosphate: step 4/6. Its function is as follows. Involved in the biosynthesis of isopentenyl diphosphate (IPP) and dimethylallyl diphosphate (DMAPP), two major building blocks of isoprenoid compounds. Catalyzes the conversion of 4-diphosphocytidyl-2-C-methyl-D-erythritol 2-phosphate (CDP-ME2P) to 2-C-methyl-D-erythritol 2,4-cyclodiphosphate (ME-CPP) with a corresponding release of cytidine 5-monophosphate (CMP). The protein is 2-C-methyl-D-erythritol 2,4-cyclodiphosphate synthase of Yersinia enterocolitica serotype O:8 / biotype 1B (strain NCTC 13174 / 8081).